Reading from the N-terminus, the 139-residue chain is Small ribosomal subunit protein bS16 (139 aa).

A disordered region spans residues 84–139 (KGEPAPAPLLQPAEKAARPSFEAIGGEDEGKGEAITQKKKADKKDEAAAESSASEA).

Belongs to the bacterial ribosomal protein bS16 family.

This Streptomyces coelicolor (strain ATCC BAA-471 / A3(2) / M145) protein is Small ribosomal subunit protein bS16.